The primary structure comprises 503 residues: Aromatase (503 aa).

Substrate-binding residues include D309 and M374. Residue C437 coordinates heme.

Belongs to the cytochrome P450 family. Requires heme as cofactor.

Its subcellular location is the membrane. The enzyme catalyses testosterone + 3 reduced [NADPH--hemoprotein reductase] + 3 O2 = 17beta-estradiol + formate + 3 oxidized [NADPH--hemoprotein reductase] + 4 H2O + 4 H(+). The catalysed reaction is androst-4-ene-3,17-dione + 3 reduced [NADPH--hemoprotein reductase] + 3 O2 = estrone + formate + 3 oxidized [NADPH--hemoprotein reductase] + 4 H2O + 4 H(+). In terms of biological role, catalyzes the formation of aromatic C18 estrogens from C19 androgens. This is Aromatase (CYP19A1) from Callithrix jacchus (White-tufted-ear marmoset).